The following is a 350-amino-acid chain: Inositol 2-dehydrogenase/D-chiro-inositol 3-dehydrogenase (350 aa).

It belongs to the Gfo/Idh/MocA family. Homotetramer.

The catalysed reaction is myo-inositol + NAD(+) = scyllo-inosose + NADH + H(+). It carries out the reaction 1D-chiro-inositol + NAD(+) = scyllo-inosine + NADH + H(+). The protein operates within polyol metabolism; myo-inositol degradation into acetyl-CoA; acetyl-CoA from myo-inositol: step 1/7. Involved in the oxidation of myo-inositol (MI) and D-chiro-inositol (DCI) to 2-keto-myo-inositol (2KMI or 2-inosose) and 1-keto-D-chiro-inositol (1KDCI), respectively. The sequence is that of Inositol 2-dehydrogenase/D-chiro-inositol 3-dehydrogenase from Lactiplantibacillus plantarum (strain ATCC BAA-793 / NCIMB 8826 / WCFS1) (Lactobacillus plantarum).